The primary structure comprises 161 residues: uncharacterized protein (161 aa).

Residues 1–29 are a coiled coil; the sequence is MTLYDTVKELQEKLRNGEIEINTFLERLG.

This is an uncharacterized protein from Acidianus convivator (ATV).